Here is a 402-residue protein sequence, read N- to C-terminus: MSLEGIGFGYRERAPYASNPAFSRGRLVPEAESPTRTPFQRDRDRIIHSTAFRRLKHKTQVFIAHEGDHYRTRLTHTIEVAQIARALARALRLDEDLAEAVALVHDFGHTPFGHTGEDALNERMKNFGGFDHNAQSLRIVTKLEHRYADFDGLNLSWETLEGLVKHNGPLLGPYAAHPDIPVPQPILDFNARYDLELSRFASLEAQCAAIADDIAYNAHDIDDGLRAGLLTLESLDEVPLAKRLLDIVRTRYPNLDPVRTGHELVRRQITIMVEDLIEEAQRRLASARPGTMEDVHNQPRALVGFSDAMRAEEKVLKRFLFKNLYFHESVVVRRHAADRIVQDLFDACFTDPSLMPDEWRLGCEALDKAALARRVADYLAGMTDNYAVREHRRLFDRTPDLA.

Positions 73–217 (RLTHTIEVAQ…AAIADDIAYN (145 aa)) constitute an HD domain.

The protein belongs to the dGTPase family. Type 2 subfamily.

The polypeptide is Deoxyguanosinetriphosphate triphosphohydrolase-like protein (Brucella suis (strain ATCC 23445 / NCTC 10510)).